The primary structure comprises 504 residues: UDP-N-acetylmuramoylalanine--D-glutamate ligase (504 aa).

G129–T135 is an ATP binding site.

Belongs to the MurCDEF family.

The protein localises to the cytoplasm. The catalysed reaction is UDP-N-acetyl-alpha-D-muramoyl-L-alanine + D-glutamate + ATP = UDP-N-acetyl-alpha-D-muramoyl-L-alanyl-D-glutamate + ADP + phosphate + H(+). The protein operates within cell wall biogenesis; peptidoglycan biosynthesis. Functionally, cell wall formation. Catalyzes the addition of glutamate to the nucleotide precursor UDP-N-acetylmuramoyl-L-alanine (UMA). The sequence is that of UDP-N-acetylmuramoylalanine--D-glutamate ligase from Burkholderia thailandensis (strain ATCC 700388 / DSM 13276 / CCUG 48851 / CIP 106301 / E264).